A 243-amino-acid polypeptide reads, in one-letter code: 7-cyano-7-deazaguanine synthase (243 aa).

ATP is bound at residue Phe-18–Leu-28. The Zn(2+) site is built by Cys-206, Cys-221, Cys-224, and Cys-227.

Belongs to the QueC family. Zn(2+) serves as cofactor.

It carries out the reaction 7-carboxy-7-deazaguanine + NH4(+) + ATP = 7-cyano-7-deazaguanine + ADP + phosphate + H2O + H(+). Its pathway is purine metabolism; 7-cyano-7-deazaguanine biosynthesis. Functionally, catalyzes the ATP-dependent conversion of 7-carboxy-7-deazaguanine (CDG) to 7-cyano-7-deazaguanine (preQ(0)). This is 7-cyano-7-deazaguanine synthase from Maricaulis maris (strain MCS10) (Caulobacter maris).